The chain runs to 160 residues: SsrA-binding protein (160 aa).

The interval 131-160 is disordered; the sequence is KKEYDKRHTERERDSDRELQRAVRTKGKDD.

It belongs to the SmpB family.

It localises to the cytoplasm. Required for rescue of stalled ribosomes mediated by trans-translation. Binds to transfer-messenger RNA (tmRNA), required for stable association of tmRNA with ribosomes. tmRNA and SmpB together mimic tRNA shape, replacing the anticodon stem-loop with SmpB. tmRNA is encoded by the ssrA gene; the 2 termini fold to resemble tRNA(Ala) and it encodes a 'tag peptide', a short internal open reading frame. During trans-translation Ala-aminoacylated tmRNA acts like a tRNA, entering the A-site of stalled ribosomes, displacing the stalled mRNA. The ribosome then switches to translate the ORF on the tmRNA; the nascent peptide is terminated with the 'tag peptide' encoded by the tmRNA and targeted for degradation. The ribosome is freed to recommence translation, which seems to be the essential function of trans-translation. The sequence is that of SsrA-binding protein from Pseudomonas syringae pv. tomato (strain ATCC BAA-871 / DC3000).